A 579-amino-acid polypeptide reads, in one-letter code: MFS-type transporter olcL (579 aa).

Over residues 1 to 24 (MANIGGSNAVSSAQGSQISDSPTT) the composition is skewed to polar residues. The segment at 1–75 (MANIGGSNAV…GFGEDGCQSD (75 aa)) is disordered. A compositionally biased stretch (basic and acidic residues) spans 25–35 (VDDRLDEHKET). Residues 36 to 54 (STQSIDHSENITQSPTSLQ) show a composition bias toward polar residues. An N-linked (GlcNAc...) asparagine glycan is attached at N45. 9 helical membrane passes run 85–105 (LAAI…DNTI), 121–141 (GDVG…TLVF), 159–179 (AVFE…GLII), 183–203 (IAGL…SQSV), 214–234 (LVGG…GAFT), 241–261 (WCFY…LLFF), 282–302 (LIGL…LQWG), 310–330 (SGRI…FIMV), and 355–375 (LFNF…PVWF). N380 carries an N-linked (GlcNAc...) asparagine glycan. The next 5 membrane-spanning stretches (helical) occupy residues 388-408 (LMNL…GYGV), 411-431 (IGYY…GAGL), 439-459 (FGPS…GLGL), 479-501 (IAIV…QNVF), and 553-573 (FYVG…IQWI).

It belongs to the major facilitator superfamily. TCR/Tet family.

The protein localises to the peroxisome membrane. MFS-type transporter; part of the gene cluster that mediates the biosynthesis of 15-deoxyoxalicine B. The first step of the pathway is the synthesis of nicotinyl-CoA from nicotinic acid by the nicotinic acid-CoA ligase olcI. Nicotinyl-CoA is then a substrate of polyketide synthase olcA to produce 4-hydroxy-6-(3-pyridinyl)-2H-pyran-2-one (HPPO) which is further prenylated by the polyprenyl transferase olcH to yield geranylgeranyl-HPPO. Geranylgeranyl pyrophosphate is provided by the cluster-specific geranylgeranyl pyrophosphate synthase olcC. The FAD-dependent monooxygenase olcE catalyzes the epoxidation of geranylgeranyl-HPPO and the terpene cyclase olcD catalyzes the cyclization of the terpenoid component, resulting in the formation of the tricyclic terpene moiety seen in predecaturin E. The cytochrome P450 monooxygenase then catalyzes the allylic oxidation of predecaturin E, which is followed by spirocylization with concomitant loss of one molecule of water to form decaturin E. Decaturin E is the substrate of the cytochrome P450 monooxygenase olcJ which hydroxylates it at the C-29 position to form decaturin F. The short-chain dehydrogenase/reductase olcF may catalyze the oxidation of decaturin F to generate the 29-hydroxyl-27-one intermediate, and subsequent hemiacetal formation probably leads to the formation of decaturin C. The dioxygenase olcK may be a peroxisomal enzyme that catalyzes the hydroxylation of decaturin C into decaturin A once decaturin C is shuttled into the peroxisome by the MFS transporter olcL. Finally the cytochrome P450 monooxygenase olcB catalyzes the oxidative rearrangement to yield 15-deoxyoxalicine B. In the absence of olcJ, decaturin E may be shunted to a pathway in which it is oxidized to a ketone, possibly by olcF, to form decaturin D, which undergoes further allylic oxidation to yield decaturin G. Moreover, in the absence of oclK or oclL, oclB can convert decaturin C into 15-deoxyoxalicine A. The protein is MFS-type transporter olcL of Penicillium canescens.